A 981-amino-acid polypeptide reads, in one-letter code: Anoctamin-3 (981 aa).

Residues 1-22 (MVHHSGSIQSFKQQKGMNISKS) show a composition bias toward polar residues. The interval 1-33 (MVHHSGSIQSFKQQKGMNISKSEITKETSLKPS) is disordered. Residues 1-403 (MVHHSGSIQS…LYFAWLGWYT (403 aa)) are Cytoplasmic-facing. Residues 404 to 424 (GMLIPAAIVGLCVFFYGLFTM) traverse the membrane as a helical segment. 3 N-linked (GlcNAc...) asparagine glycosylation sites follow: asparagine 425, asparagine 448, and asparagine 455. Topologically, residues 425–469 (NNSQVSQEICKATEVFMCPLCDKNCSLQRLNDSCIYAKVTYLFDN) are extracellular. The chain crosses the membrane as a helical span at residues 470–490 (GGTVFFAIFMAIWATVFLEFW). The Cytoplasmic portion of the chain corresponds to 491-550 (KRRRSILTYTWDLIEWEEEEETLRPQFEAKYYKMEIVNPITGKPEPHQPSSDKVTRLLVS). The helical transmembrane segment at 551 to 571 (VSGIFFMISLVITAVFGVVVY) threads the bilayer. The Extracellular portion of the chain corresponds to 572-592 (RLVVMEQFASFKWNFIKQYWQ). A helical transmembrane segment spans residues 593-613 (FATSAAAVCINFIIIMLLNLA). The Cytoplasmic portion of the chain corresponds to 614 to 640 (YEKIAYLLTNLEYPRTESEWENSFALK). The helical transmembrane segment at 641 to 661 (MFLFQFVNLNSSIFYIAFFLG) threads the bilayer. Over 662–761 (RFVGHPGKYN…MDEYLEMVLQ (100 aa)) the chain is Extracellular. A helical membrane pass occupies residues 762–782 (FGFTTIFVAAFPLAPLLALLN). Over 783 to 810 (NIIEIRLDAYKFVTQWRRPLPARATDIG) the chain is Cytoplasmic. The chain crosses the membrane as a helical span at residues 811-831 (IWLGILEGIGILAVITNAFVI). Topologically, residues 832-914 (AITSDYIPRF…QYWHILAARL (83 aa)) are extracellular. N-linked (GlcNAc...) asparagine glycosylation is present at asparagine 866. A helical membrane pass occupies residues 915–935 (AFIIVFEHLVFGIKSFIAYLI). Topologically, residues 936-981 (PDVPKGLHDRIRREKYLVQEMMYEAELEHLQQQRRKSGQPVHHEWP) are cytoplasmic.

It belongs to the anoctamin family. Interacts with KCNT1/Slack. As to expression, highly expressed in the forebrain striatum.

Its subcellular location is the cell membrane. It carries out the reaction a 1,2-diacyl-sn-glycero-3-phosphocholine(in) = a 1,2-diacyl-sn-glycero-3-phosphocholine(out). The enzyme catalyses a beta-D-galactosyl-(1&lt;-&gt;1')-N-acylsphing-4-enine(out) = a beta-D-galactosyl-(1&lt;-&gt;1')-N-acylsphing-4-enine(in). Has calcium-dependent phospholipid scramblase activity; scrambles phosphatidylcholine and galactosylceramide. Seems to act as potassium channel regulator and may inhibit pain signaling; can facilitate KCNT1/Slack channel activity by promoting its full single-channel conductance at very low sodium concentrations and by increasing its sodium sensitivity. Does not exhibit calcium-activated chloride channel (CaCC) activity. The chain is Anoctamin-3 (ANO3) from Homo sapiens (Human).